The sequence spans 228 residues: UPF0502 protein Rfer_1648 (228 aa).

It belongs to the UPF0502 family.

This chain is UPF0502 protein Rfer_1648, found in Albidiferax ferrireducens (strain ATCC BAA-621 / DSM 15236 / T118) (Rhodoferax ferrireducens).